Reading from the N-terminus, the 271-residue chain is Thiazole synthase (271 aa).

The active-site Schiff-base intermediate with DXP is the lysine 104. Residues glycine 165, 192 to 193 (AG), and 214 to 215 (NT) each bind 1-deoxy-D-xylulose 5-phosphate.

The protein belongs to the ThiG family. As to quaternary structure, homotetramer. Forms heterodimers with either ThiH or ThiS.

It localises to the cytoplasm. It carries out the reaction [ThiS sulfur-carrier protein]-C-terminal-Gly-aminoethanethioate + 2-iminoacetate + 1-deoxy-D-xylulose 5-phosphate = [ThiS sulfur-carrier protein]-C-terminal Gly-Gly + 2-[(2R,5Z)-2-carboxy-4-methylthiazol-5(2H)-ylidene]ethyl phosphate + 2 H2O + H(+). It participates in cofactor biosynthesis; thiamine diphosphate biosynthesis. Catalyzes the rearrangement of 1-deoxy-D-xylulose 5-phosphate (DXP) to produce the thiazole phosphate moiety of thiamine. Sulfur is provided by the thiocarboxylate moiety of the carrier protein ThiS. In vitro, sulfur can be provided by H(2)S. The polypeptide is Thiazole synthase (Burkholderia mallei (strain ATCC 23344)).